The primary structure comprises 141 residues: MEAAQQKNESVMDYAPDWTQISVLFFVVMGGGVLASLSALALAGTVVLMLILTPVFLLLSPVILPVGAVIALAAAAFMAAVTIGIAGAAALIWVYRYARGQPTVGSEKIDRARVRLFEAAEKLKAQLQYKLFNENSKANFD.

3 consecutive transmembrane segments (helical) span residues 23–43, 46–66, and 74–94; these read VLFFVVMGGGVLASLSALALA, VVLMLILTPVFLLLSPVILPV, and AAAFMAAVTIGIAGAAALIWV. The short motif at 54–65 is the Proline-knot element; the sequence is PVFLLLSPVILP.

Belongs to the oleosin family. Expressed in megagametophytes (at protein level).

It localises to the lipid droplet. It is found in the membrane. This is Oleosin L from Pinus massoniana (Chinese red pine).